We begin with the raw amino-acid sequence, 199 residues long: dITP/XTP pyrophosphatase (199 aa).

8–13 contributes to the substrate binding site; sequence SGNAGK. Residue aspartate 69 is the Proton acceptor of the active site. A Mg(2+)-binding site is contributed by aspartate 69. Substrate contacts are provided by residues serine 70, 154–157, lysine 177, and 182–183; these read FGYN and HR.

It belongs to the HAM1 NTPase family. As to quaternary structure, homodimer. Mg(2+) serves as cofactor.

It catalyses the reaction XTP + H2O = XMP + diphosphate + H(+). The catalysed reaction is dITP + H2O = dIMP + diphosphate + H(+). It carries out the reaction ITP + H2O = IMP + diphosphate + H(+). Pyrophosphatase that catalyzes the hydrolysis of nucleoside triphosphates to their monophosphate derivatives, with a high preference for the non-canonical purine nucleotides XTP (xanthosine triphosphate), dITP (deoxyinosine triphosphate) and ITP. Seems to function as a house-cleaning enzyme that removes non-canonical purine nucleotides from the nucleotide pool, thus preventing their incorporation into DNA/RNA and avoiding chromosomal lesions. This Xylella fastidiosa (strain 9a5c) protein is dITP/XTP pyrophosphatase.